Reading from the N-terminus, the 149-residue chain is AAETVVSGAELSLTANSGGEKTPPHAPGLLRRSKRCSCSSLMDKECVYFCHLDIIWVNTPGHIAPYGLGGPFRSKRSLKELFPTKATEHRNRCQCANQKDKKCWNFCQAGKELSSQDTMQKGWDNHKKGKDCSKLGKKCISQQLGNGKK.

A propeptide spanning residues A1 to S33 is cleaved from the precursor. The tract at residues V6–A26 is disordered. 2 disulfide bridges follow: C36/C50 and C38/C46. A propeptide spanning residues V57 to K149 is cleaved from the precursor. An endothelin-like region spans residues C93 to C107.

It belongs to the endothelin/sarafotoxin family.

It localises to the secreted. Functionally, endothelins are endothelium-derived vasoconstrictor peptides. Probable ligand for G-protein coupled receptors EDNRA and EDNRB which activates PTK2B, BCAR1, BCAR3 and, GTPases RAP1 and RHOA cascade in glomerular mesangial cells. Also binds the DEAR/FBXW7-AS1 receptor. Promotes mesenteric arterial wall remodeling via activation of ROCK signaling and subsequent colocalization of NFATC3 with F-actin filaments. NFATC3 then translocates to the nucleus where it subsequently promotes the transcription of the smooth muscle hypertrophy and differentiation marker ACTA2. This Cavia porcellus (Guinea pig) protein is Endothelin-1 (EDN1).